The following is a 165-amino-acid chain: Fibrinogen-binding protein (165 aa).

Positions 1-29 (MKNKLIAKSLLTIAAIGITTTTIASTADA) are cleaved as a signal peptide.

Interacts with host fibrinogen alpha chain/FGA. Interacts with host complement protein C3.

The protein resides in the secreted. Its function is as follows. Extracellular fibrinogen-binding protein that plays an important role in virulence. By interacting with the alpha chain of fibrinogen and its derivative fibrin, enhances a non-functional interaction between fibrinogen and platelets and is responsible for repression of fibrinogen-dependent platelet aggregation. In addition, assembles a fibrinogen protective shield around the bacteria which results in impaired phagocytic clearance by the host. Mechanistically, interacts with host complement C3b deposited on the surface of the bacterium via its C-terminal and then recruits fibrinogen via its N-terminal. This chain is Fibrinogen-binding protein (fib), found in Staphylococcus aureus.